A 453-amino-acid polypeptide reads, in one-letter code: MLPKIALVGRPNVGKSTLFNRLIRKNRAITHDRPGVTRDRMEGLVQSIGHPSFILIDTGGVILDSHYSTINIIDELHGFEKDIFQQVQLAIEESQAICLIVNARDGLLPFDEHLALFLRKTGKPILLAVNKVDGIEKEDQIVAEFHILGLPMIAVSAEHGHNIRQLENELSLLLPNNENIKDQSTAQAALKLAIIGRPNAGKSSIINAIIGKNKLIVSNIAGTTRDSIDIPFIFNKTQYLFVDTAGIRRRTKITDPVERFSVNASIKSATKANITLYVIDATEGITAQDKRLLDLLDTRKIPFILLINKTDLIAKKQKTLLSKSFKEELQFCPHIPILMVSAVTSSGLDQIIAMAEQVYLECSTRINTGVLNRAMEEIITRHQPPVVRRIRPKFFYLTQAETSPPTFVFFVNDAEKISETYVRYLERSLRKIFNLHHAPIRIRLRSSHKKRNQ.

EngA-type G domains lie at 3 to 178 (PKIA…PNNE) and 190 to 363 (LKLA…LECS). GTP contacts are provided by residues 9-16 (GRPNVGKS), 57-61 (DTGGV), 130-133 (NKVD), 196-203 (GRPNAGKS), 243-247 (DTAGI), and 308-311 (NKTD). The KH-like domain occupies 364–448 (TRINTGVLNR…PIRIRLRSSH (85 aa)).

It belongs to the TRAFAC class TrmE-Era-EngA-EngB-Septin-like GTPase superfamily. EngA (Der) GTPase family. As to quaternary structure, associates with the 50S ribosomal subunit.

In terms of biological role, GTPase that plays an essential role in the late steps of ribosome biogenesis. The polypeptide is GTPase Der (Lawsonia intracellularis (strain PHE/MN1-00)).